The chain runs to 800 residues: Protocadherin beta-10 (800 aa).

The first 26 residues, 1 to 26 (MAVRELCFPRQRQVLFLFLFWGVSLA), serve as a signal peptide directing secretion. Over 27–692 (GSGFGRYSVT…AEADLLTVYL (666 aa)) the chain is Extracellular. 5 Cadherin domains span residues 35–133 (VTEE…APVF), 138–242 (TVLK…APQF), 247–347 (YETQ…PPEL), 352–451 (FSNS…APAF), and 456–561 (YTLF…SPFV). N-linked (GlcNAc...) asparagine glycans are attached at residues Asn-169 and Asn-181. N-linked (GlcNAc...) asparagine glycans are attached at residues Asn-418 and Asn-436. An N-linked (GlcNAc...) asparagine glycan is attached at Asn-567. The Cadherin 6 domain occupies 568–671 (GSAPCTELVP…LVDGFSQPYL (104 aa)). Residues 693–713 (VVALASVSSLFLLSVLLFVAV) traverse the membrane as a helical segment. The Cytoplasmic portion of the chain corresponds to 714 to 800 (RLCRRSRAAS…FRNSFGFNIQ (87 aa)).

Its subcellular location is the cell membrane. Potential calcium-dependent cell-adhesion protein. May be involved in the establishment and maintenance of specific neuronal connections in the brain. This chain is Protocadherin beta-10 (PCDHB10), found in Homo sapiens (Human).